The following is a 354-amino-acid chain: Uroporphyrinogen decarboxylase (354 aa).

Substrate contacts are provided by residues 27-31, Phe-46, Asp-77, Tyr-154, Thr-209, and His-327; that span reads RQAGR.

It belongs to the uroporphyrinogen decarboxylase family. In terms of assembly, homodimer.

Its subcellular location is the cytoplasm. It catalyses the reaction uroporphyrinogen III + 4 H(+) = coproporphyrinogen III + 4 CO2. The protein operates within porphyrin-containing compound metabolism; protoporphyrin-IX biosynthesis; coproporphyrinogen-III from 5-aminolevulinate: step 4/4. Its function is as follows. Catalyzes the decarboxylation of four acetate groups of uroporphyrinogen-III to yield coproporphyrinogen-III. This chain is Uroporphyrinogen decarboxylase, found in Escherichia coli O157:H7.